Consider the following 1022-residue polypeptide: Protein translocase subunit SECA1, chloroplastic (1022 aa).

The transit peptide at 1–72 directs the protein to the chloroplast; the sequence is MVSPLCDSQL…SRKRSTSVNA (72 aa). An N-acetylserine modification is found at Ser73. 176 to 183 contributes to the ATP binding site; sequence MRTGEGKT. A disordered region spans residues 985 to 1022; the sequence is KDEEKKSQNGKPSKQVDNASEKPKQVGVTDEPSSIASA. Over residues 993–1002 the composition is skewed to polar residues; sequence NGKPSKQVDN.

It belongs to the SecA family. In terms of assembly, part of the Sec protein translocation apparatus. Interacts probably with SCY1. Expressed in green tissues, including cotyledons, rosette and cauline leaves, and sepals. Also detected at the base and the tip of the trichome.

It is found in the plastid. It localises to the chloroplast stroma. The protein localises to the chloroplast thylakoid membrane. It catalyses the reaction ATP + H2O + chloroplast-proteinSide 1 = ADP + phosphate + chloroplast-proteinSide 2.. In terms of biological role, has a central role in coupling the hydrolysis of ATP to the transfer of proteins across the thylakoid membrane. Involved in photosynthetic acclimation and required for chloroplast biogenesis. This chain is Protein translocase subunit SECA1, chloroplastic, found in Arabidopsis thaliana (Mouse-ear cress).